Reading from the N-terminus, the 176-residue chain is Peptide deformylase (176 aa).

Fe cation-binding residues include cysteine 92 and histidine 134. Glutamate 135 is an active-site residue. Histidine 138 is a Fe cation binding site.

This sequence belongs to the polypeptide deformylase family. Requires Fe(2+) as cofactor.

It carries out the reaction N-terminal N-formyl-L-methionyl-[peptide] + H2O = N-terminal L-methionyl-[peptide] + formate. Removes the formyl group from the N-terminal Met of newly synthesized proteins. Requires at least a dipeptide for an efficient rate of reaction. N-terminal L-methionine is a prerequisite for activity but the enzyme has broad specificity at other positions. The sequence is that of Peptide deformylase from Acinetobacter baumannii (strain SDF).